Here is a 299-residue protein sequence, read N- to C-terminus: Bifunctional protein FolD (299 aa).

NADP(+) is bound by residues 169–171 (GRS), Ser194, and Ile235.

This sequence belongs to the tetrahydrofolate dehydrogenase/cyclohydrolase family. Homodimer.

The enzyme catalyses (6R)-5,10-methylene-5,6,7,8-tetrahydrofolate + NADP(+) = (6R)-5,10-methenyltetrahydrofolate + NADPH. The catalysed reaction is (6R)-5,10-methenyltetrahydrofolate + H2O = (6R)-10-formyltetrahydrofolate + H(+). It participates in one-carbon metabolism; tetrahydrofolate interconversion. Its function is as follows. Catalyzes the oxidation of 5,10-methylenetetrahydrofolate to 5,10-methenyltetrahydrofolate and then the hydrolysis of 5,10-methenyltetrahydrofolate to 10-formyltetrahydrofolate. The polypeptide is Bifunctional protein FolD (Trichormus variabilis (strain ATCC 29413 / PCC 7937) (Anabaena variabilis)).